The following is a 269-amino-acid chain: RBPJ-interacting and tubulin-associated protein 1 (269 aa).

A Nuclear export signal motif is present at residues 5 to 17 (VELAVSGMQTLGL). Disordered regions lie at residues 66–105 (VGKE…PISH) and 141–269 (LWTP…PPWK). Positions 80–92 (CETTPSRGSTPTL) are enriched in polar residues. Positions 92–108 (LTPRKKNKYRPISHTPS) match the Nuclear localization signal motif. Positions 128–156 (RMAKGDAAKLRALLWTPPPTPRGSHSPRP) are interaction with RBPJ/RBPSUH. The interval 156–269 (PREAPLRAIH…ATQKPKPPWK (114 aa)) is interaction with tubulin. A compositionally biased stretch (polar residues) spans 200–253 (HSLTHLNVPSTGHPATSAPHTNGPQDLRPSTSGVTFRSPLVTSRARSVSISVPS).

Belongs to the RITA family. In terms of assembly, interacts with RBPJ/RBPSUH.

The protein resides in the cytoplasm. It localises to the nucleus. It is found in the cytoskeleton. Its subcellular location is the microtubule organizing center. The protein localises to the centrosome. Functionally, tubulin-binding protein that acts as a negative regulator of Notch signaling pathway. Shuttles between the cytoplasm and the nucleus and mediates the nuclear export of RBPJ/RBPSUH, thereby preventing the interaction between RBPJ/RBPSUH and NICD product of Notch proteins (Notch intracellular domain), leading to down-regulate Notch-mediated transcription. May play a role in neurogenesis. The polypeptide is RBPJ-interacting and tubulin-associated protein 1 (RITA1) (Homo sapiens (Human)).